Here is a 144-residue protein sequence, read N- to C-terminus: Putative sugar phosphate isomerase RC0402 (144 aa).

His12 lines the substrate pocket. The Proton donor role is filled by His101. Arg135 is a binding site for substrate.

The protein belongs to the LacAB/RpiB family.

In Rickettsia conorii (strain ATCC VR-613 / Malish 7), this protein is Putative sugar phosphate isomerase RC0402.